A 231-amino-acid polypeptide reads, in one-letter code: Ribonuclease HI (231 aa).

The 146-residue stretch at 1 to 146 (MRERAVAACD…ADRAASQAAV (146 aa)) folds into the RNase H type-1 domain. Mg(2+) contacts are provided by D10, E50, D72, and D138. Low complexity-rich tracts occupy residues 148-157 (QEAAGSALGS) and 166-181 (VPAA…SGAA). Disordered regions lie at residues 148–192 (QEAA…SART) and 212–231 (PIAK…VAAG).

The protein belongs to the RNase H family. As to quaternary structure, monomer. Mg(2+) serves as cofactor.

The protein localises to the cytoplasm. It catalyses the reaction Endonucleolytic cleavage to 5'-phosphomonoester.. Functionally, endonuclease that specifically degrades the RNA of RNA-DNA hybrids. This Streptomyces coelicolor (strain ATCC BAA-471 / A3(2) / M145) protein is Ribonuclease HI (rnhA).